A 363-amino-acid polypeptide reads, in one-letter code: S-adenosylmethionine:tRNA ribosyltransferase-isomerase (363 aa).

Belongs to the QueA family. As to quaternary structure, monomer.

Its subcellular location is the cytoplasm. It carries out the reaction 7-aminomethyl-7-carbaguanosine(34) in tRNA + S-adenosyl-L-methionine = epoxyqueuosine(34) in tRNA + adenine + L-methionine + 2 H(+). Its pathway is tRNA modification; tRNA-queuosine biosynthesis. Its function is as follows. Transfers and isomerizes the ribose moiety from AdoMet to the 7-aminomethyl group of 7-deazaguanine (preQ1-tRNA) to give epoxyqueuosine (oQ-tRNA). In Pasteurella multocida (strain Pm70), this protein is S-adenosylmethionine:tRNA ribosyltransferase-isomerase.